The primary structure comprises 98 residues: Keratinocyte differentiation-associated protein (98 aa).

A signal peptide spans 1–22 (MKIPILPIVALLSLLALHAAQG).

Ubiquitously expressed in stratified epithelium.

The protein localises to the secreted. May act as a soluble regulator of keratinocyte differentiation. May play an important role in embryonic skin morphogenesis. The polypeptide is Keratinocyte differentiation-associated protein (Rattus norvegicus (Rat)).